The sequence spans 351 residues: Cell shape-determining protein MreB (351 aa).

Residues 20-22, 169-171, 217-220, and 299-302 contribute to the ATP site; these read TAN, GGT, ERIK, and GGAL.

The protein belongs to the FtsA/MreB family. Forms polymers.

It is found in the cytoplasm. Its function is as follows. Forms membrane-associated dynamic filaments that are essential for cell shape determination. Acts by regulating cell wall synthesis and cell elongation, and thus cell shape. A feedback loop between cell geometry and MreB localization may maintain elongated cell shape by targeting cell wall growth to regions of negative cell wall curvature. This Pasteurella multocida (strain Pm70) protein is Cell shape-determining protein MreB.